Reading from the N-terminus, the 447-residue chain is Putative branched-chain amino acid carrier protein SAR1419 (447 aa).

The next 12 helical transmembrane spans lie at 6–26, 40–60, 74–94, 114–134, 143–163, 193–213, 229–249, 290–310, 326–346, 350–370, 382–402, and 417–437; these read WVIG…IFPP, ILAF…VGAL, PKFS…LFAI, SSIA…YICL, IGSL…IKAY, GYLT…VNAV, LTAG…LGYI, LLGI…IVAV, FVLV…NAVI, IPVL…ILIA, IPVI…LGWL, and LEWF…GIFV.

It belongs to the branched chain amino acid transporter family.

The protein localises to the cell membrane. In terms of biological role, component of the transport system for branched-chain amino acids (leucine, isoleucine and valine), which is coupled to a proton motive force (Potential). Contributes to NaCl tolerance. The protein is Putative branched-chain amino acid carrier protein SAR1419 of Staphylococcus aureus (strain MRSA252).